The chain runs to 242 residues: DNA repair protein RecO (242 aa).

Belongs to the RecO family. As to quaternary structure, monomer.

Its function is as follows. Involved in DNA repair and RecF pathway recombination. The chain is DNA repair protein RecO from Salmonella enteritidis PT4 (strain P125109).